Reading from the N-terminus, the 119-residue chain is uncharacterized protein (119 aa).

To Synechocystis PCC 6803 slr0903.

This is an uncharacterized protein from Methanocaldococcus jannaschii (strain ATCC 43067 / DSM 2661 / JAL-1 / JCM 10045 / NBRC 100440) (Methanococcus jannaschii).